A 56-amino-acid polypeptide reads, in one-letter code: UPF0391 membrane protein Jann_3570 (56 aa).

2 helical membrane passes run 4–24 and 29–48; these read WAVT…GGIA and GIAQ…SLVA.

The protein belongs to the UPF0391 family.

Its subcellular location is the cell membrane. The polypeptide is UPF0391 membrane protein Jann_3570 (Jannaschia sp. (strain CCS1)).